The sequence spans 179 residues: Adenine phosphoribosyltransferase (179 aa).

Belongs to the purine/pyrimidine phosphoribosyltransferase family. In terms of assembly, homodimer.

The protein localises to the cytoplasm. It carries out the reaction AMP + diphosphate = 5-phospho-alpha-D-ribose 1-diphosphate + adenine. It participates in purine metabolism; AMP biosynthesis via salvage pathway; AMP from adenine: step 1/1. Its function is as follows. Catalyzes a salvage reaction resulting in the formation of AMP, that is energically less costly than de novo synthesis. The sequence is that of Adenine phosphoribosyltransferase from Gluconobacter oxydans (strain 621H) (Gluconobacter suboxydans).